The chain runs to 458 residues: Major capsid protein (458 aa).

A coiled-coil region spans residues 21–110 (LEGLTAAQKA…EIKSLLTARE (90 aa)).

Belongs to the HK97 phage major capsid protein family. Interacts with the decoration protein; each hexon binds a single copy of the decoration protein. Interacts with the portal protein. In terms of processing, the scaffolding domain delta is cleaved by the prohead protease and lost after assembly. The major capsid protein precursors together with both the portal complex and the maturation protease form prohead I. All copies of the major capsid protein precursor are cleaved to the mature major capsid protein by release of the scaffolding domain delta, yielding the metastable prohead II.

It is found in the virion. In terms of biological role, major capsid protein that self-associates to form 120 hexamers and 11 pentamers, building the T=13 icosahedral capsid which about 860 Angstroms in diameter. Responsible for its self-assembly into a procapsid. The phage does not need to encode a separate scaffolfing protein because its capsid protein contains the delta domain that carries that function. The capsid gains its final stability through the reorganization of the subunits that takes place upon expansion. DNA encapsidation through the portal triggers capsid expansion and the binding of the decoration protein to the capsid exterior. Might play a role in counteracting the host Pycsar defense system that is mediated by pyrimidine cyclases and leads to abortive infection. The sequence is that of Major capsid protein from Escherichia coli (Enterobacteria phage T5).